Consider the following 122-residue polypeptide: Prefoldin subunit 1 (122 aa).

This sequence belongs to the prefoldin subunit beta family. As to quaternary structure, heterohexamer of two PFD-alpha type and four PFD-beta type subunits.

Its function is as follows. Binds specifically to cytosolic chaperonin (c-CPN) and transfers target proteins to it. Binds to nascent polypeptide chain and promotes folding in an environment in which there are many competing pathways for nonnative proteins. In Danio rerio (Zebrafish), this protein is Prefoldin subunit 1 (pfdn1).